The chain runs to 198 residues: Recombination protein RecR (198 aa).

Residues 57–72 (CLNCGCLTDEAACYFC) form a C4-type zinc finger. Positions 80–175 (QIICVTAFPR…QISRLAFGLP (96 aa)) constitute a Toprim domain.

Belongs to the RecR family.

Its function is as follows. May play a role in DNA repair. It seems to be involved in an RecBC-independent recombinational process of DNA repair. It may act with RecF and RecO. This chain is Recombination protein RecR, found in Protochlamydia amoebophila (strain UWE25).